The primary structure comprises 228 residues: PKHD-type hydroxylase Rmet_3078 (228 aa).

Residues 80–180 form the Fe2OG dioxygenase domain; sequence IVYPPMFNRY…RVGCFFWIQS (101 aa). Residues H98, D100, and H161 each coordinate Fe cation. 2-oxoglutarate is bound at residue R171.

Fe(2+) is required as a cofactor. L-ascorbate serves as cofactor.

In Cupriavidus metallidurans (strain ATCC 43123 / DSM 2839 / NBRC 102507 / CH34) (Ralstonia metallidurans), this protein is PKHD-type hydroxylase Rmet_3078.